A 475-amino-acid polypeptide reads, in one-letter code: Ribulose bisphosphate carboxylase large chain (475 aa).

A propeptide spanning residues 1 to 2 (MS) is cleaved from the precursor. Pro3 is modified (N-acetylproline). An N6,N6,N6-trimethyllysine modification is found at Lys14. Substrate is bound by residues Asn123 and Thr173. Catalysis depends on Lys175, which acts as the Proton acceptor. Substrate is bound at residue Lys177. Mg(2+) is bound by residues Lys201, Asp203, and Glu204. Lys201 carries the post-translational modification N6-carboxylysine. Residue His294 is the Proton acceptor of the active site. Residues Arg295, His327, and Ser379 each coordinate substrate.

The protein belongs to the RuBisCO large chain family. Type I subfamily. Heterohexadecamer of 8 large chains and 8 small chains; disulfide-linked. The disulfide link is formed within the large subunit homodimers. Mg(2+) is required as a cofactor. In terms of processing, the disulfide bond which can form in the large chain dimeric partners within the hexadecamer appears to be associated with oxidative stress and protein turnover.

It localises to the plastid. The protein localises to the chloroplast. It catalyses the reaction 2 (2R)-3-phosphoglycerate + 2 H(+) = D-ribulose 1,5-bisphosphate + CO2 + H2O. It carries out the reaction D-ribulose 1,5-bisphosphate + O2 = 2-phosphoglycolate + (2R)-3-phosphoglycerate + 2 H(+). Its function is as follows. RuBisCO catalyzes two reactions: the carboxylation of D-ribulose 1,5-bisphosphate, the primary event in carbon dioxide fixation, as well as the oxidative fragmentation of the pentose substrate in the photorespiration process. Both reactions occur simultaneously and in competition at the same active site. The sequence is that of Ribulose bisphosphate carboxylase large chain from Notothixos subaureus (Golden mistletoe).